The following is an 872-amino-acid chain: Alanine--tRNA ligase (872 aa).

Zn(2+) is bound by residues histidine 571, histidine 575, cysteine 674, and histidine 678.

Belongs to the class-II aminoacyl-tRNA synthetase family. Requires Zn(2+) as cofactor.

It localises to the cytoplasm. The catalysed reaction is tRNA(Ala) + L-alanine + ATP = L-alanyl-tRNA(Ala) + AMP + diphosphate. Its function is as follows. Catalyzes the attachment of alanine to tRNA(Ala) in a two-step reaction: alanine is first activated by ATP to form Ala-AMP and then transferred to the acceptor end of tRNA(Ala). Also edits incorrectly charged Ser-tRNA(Ala) and Gly-tRNA(Ala) via its editing domain. The protein is Alanine--tRNA ligase of Symbiobacterium thermophilum (strain DSM 24528 / JCM 14929 / IAM 14863 / T).